Reading from the N-terminus, the 439-residue chain is Iron-sulfur cluster assembly factor IBA57 homolog, mitochondrial (439 aa).

The transit peptide at 1 to 72 directs the protein to the mitochondrion; sequence MQPATRSIAV…RLISVSGPDA (72 aa).

This sequence belongs to the GcvT family. CAF17/IBA57 subfamily.

It is found in the mitochondrion matrix. This is Iron-sulfur cluster assembly factor IBA57 homolog, mitochondrial (caf-17) from Neurospora crassa (strain ATCC 24698 / 74-OR23-1A / CBS 708.71 / DSM 1257 / FGSC 987).